The chain runs to 231 residues: Large ribosomal subunit protein uL3 (231 aa).

N5-methylglutamine is present on glutamine 151.

It belongs to the universal ribosomal protein uL3 family. In terms of assembly, part of the 50S ribosomal subunit. Forms a cluster with proteins L14 and L19. Methylated by PrmB.

Its function is as follows. One of the primary rRNA binding proteins, it binds directly near the 3'-end of the 23S rRNA, where it nucleates assembly of the 50S subunit. The protein is Large ribosomal subunit protein uL3 of Ehrlichia canis (strain Jake).